The sequence spans 345 residues: Heat stress transcription factor A-4c (345 aa).

A DNA-binding region spans residues 11 to 105; sequence LPPFLTKTYE…LMKNIHRRKP (95 aa). The interval 119–185 is hydrophobic repeat HR-A/B; that stretch reads PLTESERRSM…SIVAYVSQVL (67 aa). Residues 199–203 carry the Nuclear localization signal motif; that stretch reads RRKRR. The AHA1 motif lies at 226-235; it reads LTFWENLVSE. Residues 240 to 329 are disordered; it reads SGLQSSSMDH…NGNKIGNQRT (90 aa). Positions 274-283 are enriched in low complexity; sequence PPVTVTAPAP. The short motif at 289-298 is the AHA2 element; sequence DDFWEQCLTE. Composition is skewed to polar residues over residues 296 to 308 and 317 to 329; these read LTEN…QQEV and NDNN…NQRT.

It belongs to the HSF family. Class A subfamily. Homotrimer. In terms of processing, exhibits temperature-dependent phosphorylation. Expressed in roots, seedlings and at lower levels in leaves.

It is found in the nucleus. Functionally, transcriptional activator that specifically binds DNA sequence 5'-AGAAnnTTCT-3' known as heat shock promoter elements (HSE). May be involved in general response to auxin. In Arabidopsis thaliana (Mouse-ear cress), this protein is Heat stress transcription factor A-4c (HSFA4C).